A 200-amino-acid chain; its full sequence is MMTFAFYLFAISACVAGFMVVIGRNPVHSVLWLILAFLSAAGLFVLQGAEFVAMLLVVVYVGAVAVLFLFVVMMLDVDFAELKGELARYLPLALVIGVVLLAQLGIAFSGWTPSDQAESLRAAPVDAAVENTLGLGLVLYDRYVLMFQLAGLVLLVAMIGAIVLTMRHRKDVKRQNVLEQMWRDPAKTMELKDVKPGQGL.

A run of 5 helical transmembrane segments spans residues 2–22, 26–46, 51–71, 90–110, and 144–164; these read MTFA…MVVI, PVHS…LFVL, FVAM…FLFV, LPLA…AFSG, and VLMF…AIVL.

The protein belongs to the complex I subunit 6 family. In terms of assembly, NDH-1 is composed of at least 14 different subunits, Nqo1 to Nqo14. The complex has a L-shaped structure, with the hydrophobic arm (subunits Nqo7, Nqo8, Nqo10 to Nqo14) embedded in the inner membrane and the hydrophilic peripheral arm (subunits Nqo1 to Nqo6, Nqo9) protruding into the bacterial cytoplasm. The hydrophilic domain contains all the redox centers.

Its subcellular location is the cell inner membrane. It catalyses the reaction a quinone + NADH + 5 H(+)(in) = a quinol + NAD(+) + 4 H(+)(out). Functionally, NDH-1 shuttles electrons from NADH, via FMN and iron-sulfur (Fe-S) centers, to quinones in the respiratory chain. The immediate electron acceptor for the enzyme in this species is believed to be ubiquinone. Couples the redox reaction to proton translocation (for every two electrons transferred, four hydrogen ions are translocated across the cytoplasmic membrane), and thus conserves the redox energy in a proton gradient. The protein is NADH-quinone oxidoreductase chain 10 of Paracoccus denitrificans.